The following is a 272-amino-acid chain: Zinc finger protein 32 (272 aa).

The segment covering 50–65 (RREKLEQKSPESKALQ) has biased composition (basic and acidic residues). Positions 50-69 (RREKLEQKSPESKALQEDSP) are disordered. 3 C2H2-type zinc fingers span residues 76-98 (YDCQ…ERIH), 104-126 (FECT…QRIH), and 132-154 (YQCK…ERLH). Zn(2+) is bound by residues C78, C81, H94, H98, C106, C109, H122, H126, S140, Q143, G156, Y160, F197, K200, L213, A217, C246, C249, H262, and C266. C2H2-type zinc fingers lie at residues 160–182 (YECA…RRVH) and 188–210 (YRCD…IRVH). The C2H2-type 6 zinc finger occupies 216–238 (YACSHCRKSFHTRGNCLLHGKVH). The segment at 244–266 (YLCGQCGKSFTQRGSLAVHQRSC) adopts a CCHC-type zinc-finger fold.

It belongs to the krueppel C2H2-type zinc-finger protein family.

Its subcellular location is the nucleus. In terms of biological role, may be involved in transcriptional regulation. This chain is Zinc finger protein 32 (Znf32), found in Mus musculus (Mouse).